Consider the following 113-residue polypeptide: Putative membrane protein insertion efficiency factor (113 aa).

This sequence belongs to the UPF0161 family.

Its subcellular location is the cell inner membrane. Functionally, could be involved in insertion of integral membrane proteins into the membrane. The protein is Putative membrane protein insertion efficiency factor of Campylobacter jejuni subsp. doylei (strain ATCC BAA-1458 / RM4099 / 269.97).